A 119-amino-acid polypeptide reads, in one-letter code: Large ribosomal subunit protein bL20 (119 aa).

It belongs to the bacterial ribosomal protein bL20 family.

Binds directly to 23S ribosomal RNA and is necessary for the in vitro assembly process of the 50S ribosomal subunit. It is not involved in the protein synthesizing functions of that subunit. The protein is Large ribosomal subunit protein bL20 of Shewanella woodyi (strain ATCC 51908 / MS32).